Consider the following 252-residue polypeptide: Ubiquinone biosynthesis O-methyltransferase (252 aa).

Residues arginine 36, glycine 60, aspartate 81, and leucine 123 each coordinate S-adenosyl-L-methionine.

This sequence belongs to the methyltransferase superfamily. UbiG/COQ3 family.

The catalysed reaction is a 3-demethylubiquinol + S-adenosyl-L-methionine = a ubiquinol + S-adenosyl-L-homocysteine + H(+). It carries out the reaction a 3-(all-trans-polyprenyl)benzene-1,2-diol + S-adenosyl-L-methionine = a 2-methoxy-6-(all-trans-polyprenyl)phenol + S-adenosyl-L-homocysteine + H(+). It participates in cofactor biosynthesis; ubiquinone biosynthesis. Functionally, O-methyltransferase that catalyzes the 2 O-methylation steps in the ubiquinone biosynthetic pathway. This Rickettsia prowazekii (strain Madrid E) protein is Ubiquinone biosynthesis O-methyltransferase.